The chain runs to 278 residues: S-formylglutathione hydrolase YeiG (278 aa).

Active-site charge relay system residues include Ser145, Asp223, and His256.

Belongs to the esterase D family.

The enzyme catalyses S-formylglutathione + H2O = formate + glutathione + H(+). Serine hydrolase involved in the detoxification of formaldehyde. Hydrolyzes S-formylglutathione to glutathione and formate. This chain is S-formylglutathione hydrolase YeiG (yeiG), found in Escherichia coli O157:H7.